The sequence spans 257 residues: Hydroxyacylglutathione hydrolase (257 aa).

Residues His54, His56, Asp58, His59, His113, Asp137, and His175 each contribute to the Zn(2+) site.

The protein belongs to the metallo-beta-lactamase superfamily. Glyoxalase II family. In terms of assembly, monomer. Zn(2+) is required as a cofactor.

It carries out the reaction an S-(2-hydroxyacyl)glutathione + H2O = a 2-hydroxy carboxylate + glutathione + H(+). It functions in the pathway secondary metabolite metabolism; methylglyoxal degradation; (R)-lactate from methylglyoxal: step 2/2. Functionally, thiolesterase that catalyzes the hydrolysis of S-D-lactoyl-glutathione to form glutathione and D-lactic acid. The polypeptide is Hydroxyacylglutathione hydrolase (Synechocystis sp. (strain ATCC 27184 / PCC 6803 / Kazusa)).